We begin with the raw amino-acid sequence, 428 residues long: Hydrolase acrC (428 aa).

The active site involves Ser248.

The protein belongs to the AB hydrolase superfamily. FUS2 hydrolase family.

It participates in secondary metabolite biosynthesis. Hydrolase; part of the cluster that mediates the biosynthesis of acurin A, a highly reduced polyketide coupled to a serine via a peptide bond. The activities of the highly reducing polyketide synthase acrA and the nonribosomal peptide synthetase acrB are collectively responsible for the synthesis of the acurin A core structure with a heptaketide backbone produced by acrA covalently fused to a L-serine by acrB. After the formation of the PK-NRP hybrid product, it is detached from acrB by reductive release to set up the formation of the lactam ring by aldol condensation. The hydrolyase acrC then catalyzes water loss to generate a double bond in the ring. This double bond is probably reduced, which is followed by three oxidations at C-22 to generate the carboxylic acid moiety, involving probably the FAD-binding monooxygenase acrE and the cytochrome P450 monooxygenases acrD and acrF. Finally, a last methylation step performed by the O-methyltransferase acrG leads to the production of acurin A. The polypeptide is Hydrolase acrC (Aspergillus aculeatus (strain ATCC 16872 / CBS 172.66 / WB 5094)).